The chain runs to 110 residues: NADH-quinone oxidoreductase subunit K (110 aa).

3 helical membrane passes run 7–27 (LGSY…GVFV), 31–51 (IIAI…NFIA), and 73–93 (IFVI…VIAI).

It belongs to the complex I subunit 4L family. NDH-1 is composed of 14 different subunits. Subunits NuoA, H, J, K, L, M, N constitute the membrane sector of the complex.

It is found in the cell membrane. It catalyses the reaction a quinone + NADH + 5 H(+)(in) = a quinol + NAD(+) + 4 H(+)(out). Its function is as follows. NDH-1 shuttles electrons from NADH, via FMN and iron-sulfur (Fe-S) centers, to quinones in the respiratory chain. The immediate electron acceptor for the enzyme in this species is believed to be a menaquinone. Couples the redox reaction to proton translocation (for every two electrons transferred, four hydrogen ions are translocated across the cytoplasmic membrane), and thus conserves the redox energy in a proton gradient. This chain is NADH-quinone oxidoreductase subunit K, found in Desulfitobacterium hafniense (strain DSM 10664 / DCB-2).